The chain runs to 122 residues: Large ribosomal subunit protein uL14 (122 aa).

It belongs to the universal ribosomal protein uL14 family. In terms of assembly, part of the 50S ribosomal subunit. Forms a cluster with proteins L3 and L19. In the 70S ribosome, L14 and L19 interact and together make contacts with the 16S rRNA in bridges B5 and B8.

Functionally, binds to 23S rRNA. Forms part of two intersubunit bridges in the 70S ribosome. The chain is Large ribosomal subunit protein uL14 from Vesicomyosocius okutanii subsp. Calyptogena okutanii (strain HA).